Consider the following 351-residue polypeptide: Fe(3+) ions import ATP-binding protein FbpC (351 aa).

The ABC transporter domain occupies 7-237 (VVLKNVCKRF…PSSMFMANFM (231 aa)). 39–46 (GPSGCGKT) lines the ATP pocket.

The protein belongs to the ABC transporter superfamily. Fe(3+) ion importer (TC 3.A.1.10) family. As to quaternary structure, the complex is composed of two ATP-binding proteins (FbpC), two transmembrane proteins (FbpB) and a solute-binding protein (FbpA).

It localises to the cell inner membrane. The enzyme catalyses Fe(3+)(out) + ATP + H2O = Fe(3+)(in) + ADP + phosphate + H(+). In terms of biological role, part of the ABC transporter complex FbpABC involved in Fe(3+) ions import. Responsible for energy coupling to the transport system. The polypeptide is Fe(3+) ions import ATP-binding protein FbpC (Photobacterium profundum (strain SS9)).